A 158-amino-acid polypeptide reads, in one-letter code: Transcription elongation factor GreA (158 aa).

Belongs to the GreA/GreB family.

Necessary for efficient RNA polymerase transcription elongation past template-encoded arresting sites. The arresting sites in DNA have the property of trapping a certain fraction of elongating RNA polymerases that pass through, resulting in locked ternary complexes. Cleavage of the nascent transcript by cleavage factors such as GreA or GreB allows the resumption of elongation from the new 3'terminus. GreA releases sequences of 2 to 3 nucleotides. The polypeptide is Transcription elongation factor GreA (Agrobacterium fabrum (strain C58 / ATCC 33970) (Agrobacterium tumefaciens (strain C58))).